We begin with the raw amino-acid sequence, 152 residues long: Transcriptional regulator MraZ (152 aa).

2 SpoVT-AbrB domains span residues 5–52 (ASAI…PFDE) and 81–124 (AHEC…DETA).

This sequence belongs to the MraZ family. In terms of assembly, forms oligomers.

The protein resides in the cytoplasm. Its subcellular location is the nucleoid. The polypeptide is Transcriptional regulator MraZ (Shewanella sediminis (strain HAW-EB3)).